The chain runs to 360 residues: Phospho-N-acetylmuramoyl-pentapeptide-transferase (360 aa).

The next 10 helical transmembrane spans lie at 27–47, 70–90, 98–118, 134–154, 168–188, 199–219, 239–259, 263–283, 288–308, and 337–357; these read GALFTAGFFVFWFGPWIISLL, GTPTMGGLMILAGAVVSILLW, VWVTLAVTLGFGAIGFYDDYL, LLLEFAIAGAACLMISLYSPA, TLLNLGWFWVPFAAFVIVGAG, GLAIVPVMIACATFGIIAYLV, LAVVCGAVIGAGLGFLWFNAP, IFMGDTGSLALGGLLGSIAVA, IVLAIVGGLFVLEIMSVIIQV, and QVVIRFWIIAVILALVGLATL.

The protein belongs to the glycosyltransferase 4 family. MraY subfamily. Mg(2+) serves as cofactor.

It localises to the cell inner membrane. It carries out the reaction UDP-N-acetyl-alpha-D-muramoyl-L-alanyl-gamma-D-glutamyl-meso-2,6-diaminopimeloyl-D-alanyl-D-alanine + di-trans,octa-cis-undecaprenyl phosphate = di-trans,octa-cis-undecaprenyl diphospho-N-acetyl-alpha-D-muramoyl-L-alanyl-D-glutamyl-meso-2,6-diaminopimeloyl-D-alanyl-D-alanine + UMP. It functions in the pathway cell wall biogenesis; peptidoglycan biosynthesis. Functionally, catalyzes the initial step of the lipid cycle reactions in the biosynthesis of the cell wall peptidoglycan: transfers peptidoglycan precursor phospho-MurNAc-pentapeptide from UDP-MurNAc-pentapeptide onto the lipid carrier undecaprenyl phosphate, yielding undecaprenyl-pyrophosphoryl-MurNAc-pentapeptide, known as lipid I. The protein is Phospho-N-acetylmuramoyl-pentapeptide-transferase of Methylorubrum extorquens (strain CM4 / NCIMB 13688) (Methylobacterium extorquens).